Consider the following 474-residue polypeptide: Glutathione synthetase (474 aa).

At A2 the chain carries N-acetylalanine. R125 provides a ligand contact to substrate. Residue E144 participates in ATP binding. 2 residues coordinate Mg(2+): E144 and N146. Substrate-binding positions include 148 to 151, 214 to 216, Q220, and 267 to 270; these read ISAS, ERN, and RDGY. ATP-binding positions include K305, 364 to 373, Y375, and 398 to 401; these read KPQREGGGNN and MEKI. E368 is a Mg(2+) binding site. Phosphoserine is present on S415. Residue E425 participates in ATP binding. R450 serves as a coordination point for substrate. K452 and D458 together coordinate ATP. 461 to 462 contacts substrate; that stretch reads VA.

The protein belongs to the eukaryotic GSH synthase family. As to quaternary structure, homodimer. Requires Mg(2+) as cofactor.

It catalyses the reaction gamma-L-glutamyl-L-cysteine + glycine + ATP = glutathione + ADP + phosphate + H(+). The catalysed reaction is gamma-L-glutamyl-(2S)-2-aminobutanoate + glycine + ATP = ophthalmate + ADP + phosphate + H(+). Its pathway is sulfur metabolism; glutathione biosynthesis; glutathione from L-cysteine and L-glutamate: step 2/2. Its function is as follows. Catalyzes the production of glutathione from gamma-glutamylcysteine and glycine in an ATP-dependent manner. Glutathione (gamma-glutamylcysteinylglycine, GSH) is the most abundant intracellular thiol in living aerobic cells and is required for numerous processes including the protection of cells against oxidative damage, amino acid transport, the detoxification of foreign compounds, the maintenance of protein sulfhydryl groups in a reduced state and acts as a cofactor for a number of enzymes. Participates in ophthalmate biosynthesis in hepatocytes. This is Glutathione synthetase from Mus musculus (Mouse).